A 244-amino-acid chain; its full sequence is Meiotic drive suppressor wtf2 (244 aa).

A compositionally biased stretch (polar residues) spans 1 to 10; sequence MKNNYTSLKS. The segment at 1–68 is disordered; it reads MKNNYTSLKS…RENNPSRSTD (68 aa). Basic and acidic residues predominate over residues 17 to 30; it reads ELKTDHEIDLEKGP. A run of 4 helical transmembrane segments spans residues 73–93, 110–130, 149–169, and 183–203; these read FLIK…LAIC, WTLF…LTYF, WENM…VGSP, and LKWS…VFIA.

This sequence belongs to the WTF family. As to quaternary structure, homomer. Interacts with other proteins that exhibit high sequence similarity.

The protein localises to the spore membrane. The protein resides in the vacuole membrane. In terms of biological role, acts as a suppressor component of the dual wtf meiotic drive system, and can suppress but not confer meiotic drive by compatible poisons. Wtf meiotic drive systems promote unequal transmission of alleles from the parental zygote to progeny spores by encoding a poison and an antidote from the same locus; the poison is trans-acting and forms toxic aggregates in all spores within an ascus, wherease the antidote is spore-specific and targets aggregates for degradation by the vacuole. Meiotic drive by wtf systems therefore lead to poisoning of all progeny that do not inherit the dual poison/antidote allele, or express a compatible antidote. The chain is Meiotic drive suppressor wtf2 from Schizosaccharomyces kambucha (Fission yeast).